Here is an 840-residue protein sequence, read N- to C-terminus: Phosphatidylglycerol lysyltransferase (840 aa).

Over 1-8 (MNQEVKNK) the chain is Cytoplasmic. Residues 9-29 (IFSILKITFATALFIFVVITL) traverse the membrane as a helical segment. Residues 30–52 (YRELSGINFKDTLVEFSKINRMS) are Extracellular-facing. Residues 53-73 (LVLLFIGGGASLVILSMYDVI) traverse the membrane as a helical segment. The Cytoplasmic segment spans residues 74–89 (LSRALKMDISLGKVLR). A helical membrane pass occupies residues 90 to 110 (VSYIINALNAIVGFGGFIGAG). Residues 111 to 128 (VRAMVYKNYTHDKKKLVH) lie on the Extracellular side of the membrane. The chain crosses the membrane as a helical span at residues 129 to 149 (FISLILISMLTGLSLLSLLIV). At 150–161 (FHVFDASLILNK) the chain is on the cytoplasmic side. Residues 162-182 (ITWVRWVLYAVSLFLPLFIIY) traverse the membrane as a helical segment. The Extracellular portion of the chain corresponds to 183 to 200 (SMVRPPDKNNRYVGLYCT). The chain crosses the membrane as a helical span at residues 201–221 (LVSCVEWLAAAVVLYFCGVIV). At 222–229 (DVHVSFMS) the chain is on the cytoplasmic side. Residues 230 to 250 (FIAIFIIAALSGLVSFIPGGF) traverse the membrane as a helical segment. Over 251–271 (GAFDLVVLLGFKTLGVPEEKV) the chain is Extracellular. A helical transmembrane segment spans residues 272–292 (LLMLLLYRFAYYFVPVIIALI). The Cytoplasmic portion of the chain corresponds to 293 to 337 (LSSFEFGTSAKKYIEGSKYFIPAKDVTSFLMSYQKDIIAKIPSLS). Residues 338–358 (LAILVFFTSMIFFVNNLTIVY) traverse the membrane as a helical segment. Over 359–369 (DALYDGNHLTY) the chain is Extracellular. The chain crosses the membrane as a helical span at residues 370-390 (YLLLAIHTSACLLLLLNVVGI). Over 391 to 394 (YKQS) the chain is Cytoplasmic. A run of 2 helical transmembrane segments spans residues 395–415 (RRAI…TLFT) and 416–436 (YASY…IVAF). Residues 437 to 450 (RRARRLKRPIRMRN) are Cytoplasmic-facing. A helical transmembrane segment spans residues 451–471 (LVAMLLFSIFILYINHIFIAG). Residues 472–489 (TFYALDVYTIEMHTSVLK) lie on the Extracellular side of the membrane. A helical transmembrane segment spans residues 490–510 (YYFWITILIIAIIVGAIAWLF). At 511 to 840 (DYQFSKVRIS…SKVMRVIRHK (330 aa)) the chain is on the cytoplasmic side.

The protein belongs to the LPG synthase family.

The protein localises to the cell membrane. It carries out the reaction L-lysyl-tRNA(Lys) + a 1,2-diacyl-sn-glycero-3-phospho-(1'-sn-glycerol) = a 1,2-diacyl-sn-glycero-3-phospho-1'-(3'-O-L-lysyl)-sn-glycerol + tRNA(Lys). Its function is as follows. Catalyzes the transfer of a lysyl group from L-lysyl-tRNA(Lys) to membrane-bound phosphatidylglycerol (PG), which produces lysylphosphatidylglycerol (LPG), a major component of the bacterial membrane with a positive net charge. LPG synthesis contributes to bacterial virulence as it is involved in the resistance mechanism against cationic antimicrobial peptides (CAMP) produces by the host's immune system (defensins, cathelicidins) and by the competing microorganisms (bacteriocins). In fact, the modification of anionic phosphatidylglycerol with positively charged L-lysine results in repulsion of the peptides. In Staphylococcus aureus (strain MRSA252), this protein is Phosphatidylglycerol lysyltransferase (mprF).